A 387-amino-acid chain; its full sequence is Protein kinase ORF16 (387 aa).

The 300-residue stretch at 82–381 (KKILSRVGPE…VTLMTELSLL (300 aa)) folds into the Protein kinase domain. Residue K122 coordinates ATP. The active-site Proton acceptor is D226.

It belongs to the protein kinase superfamily. Ser/Thr protein kinase family.

The catalysed reaction is L-seryl-[protein] + ATP = O-phospho-L-seryl-[protein] + ADP + H(+). The enzyme catalyses L-threonyl-[protein] + ATP = O-phospho-L-threonyl-[protein] + ADP + H(+). The chain is Protein kinase ORF16 (ORF16) from Ictalurid herpesvirus 1 (strain Auburn) (IcHV-1).